The following is an 81-amino-acid chain: Sulfur carrier protein TusA (81 aa).

The active-site Cysteine persulfide intermediate is the cysteine 19.

Belongs to the sulfur carrier protein TusA family.

The protein localises to the cytoplasm. Functionally, sulfur carrier protein which probably makes part of a sulfur-relay system. The protein is Sulfur carrier protein TusA of Shewanella sp. (strain MR-4).